Reading from the N-terminus, the 633-residue chain is ATP-dependent rRNA helicase SPB4 (633 aa).

The Q motif motif lies at 11–39 (FSALTPALSEWIIDAVDAMGFVKTTPVQH). Positions 42–253 (IPMFMKNSDV…RVGLRNPVRI (212 aa)) constitute a Helicase ATP-binding domain. Residue 55-62 (AVTGSGKT) coordinates ATP. Acidic residues predominate over residues 119-131 (EPDDEDTDMEDAD). The disordered stretch occupies residues 119–140 (EPDDEDTDMEDADTPPKPTFPP). The DEAD box signature appears at 201–204 (DEAD). Positions 292–446 (AMKKILSSLQ…EITVTDEDAK (155 aa)) constitute a Helicase C-terminal domain. Positions 530 to 629 (AYKDKAREKL…KQEAEDADFE (100 aa)) form a coiled coil. 2 stretches are compositionally biased toward basic and acidic residues: residues 547 to 581 (DKEEGTKKKQHKKEDREKSAWTEQKESKATKEVRR) and 588 to 623 (REHERLAKMTDEERKEEDRVQAMIEQMRKKVAKQEA). The segment at 547–633 (DKEEGTKKKQ…EDADFEGFSD (87 aa)) is disordered. The span at 624-633 (EDADFEGFSD) shows a compositional bias: acidic residues.

It belongs to the DEAD box helicase family. DDX55/SPB4 subfamily. In terms of assembly, component of pre-60S ribosomal complexes.

The protein localises to the nucleus. It localises to the nucleolus. The catalysed reaction is ATP + H2O = ADP + phosphate + H(+). Its function is as follows. ATP-binding RNA helicase involved in the biogenesis of 60S ribosomal subunits. Binds 90S pre-ribosomal particles and dissociates from pre-60S ribosomal particles after processing of 27SB pre-rRNA. Required for the normal formation of 18S rRNA through the processing of pre-rRNAs at sites A0, A1 and A2, and the normal formation of 25S and 5.8S rRNAs through the processing of pre-rRNAs at sites C1 and C2. This Phaeosphaeria nodorum (strain SN15 / ATCC MYA-4574 / FGSC 10173) (Glume blotch fungus) protein is ATP-dependent rRNA helicase SPB4.